Reading from the N-terminus, the 690-residue chain is MSAPTTTKASASSSPPALRPLSSSLLLTIPTTNAQLVLPSVTVPAARRHNSTKSTNSTTSTNSTTATSKMPIERRAAEIEKRIAAIPLERYRNFCIVAHIDHGKSTLSDRLLEHTGTIVAGDGNKQVLDKLDVERERGITVKAQTCTMIYKHKEDGLDYLLHLVDTPGHVDFRAEVTRSYSSCSGALLLVDASQGVQAQTVANFYLAFAQGLSLVPVVNKIDMASADVPRVLEQLETVFELDTSTAVKVSAKTGQGVGEILPAVIKKMPAPVGDAKKPLRMLLVDSWYDTFKGVVLLVRLFDGTLKQGDKVYSYATGNEYIVGEVGIQYPDAVPQKVLRAGQVGYVFFNPGMKRIQDAKLGDTFTNVGYEDIVEPCPGFEEPKPMVFVAAFPTNQDDYGRLADSISHLVLNDRSVTLQKDYSEALGAGWRLGFLGSLHCSVFQDRLRQEHGASIIITEPAVPTKIVWSTGQEEIVTNPAEFPDPDDHRIRSATLYEPFVNATVTLPEEYVGRCIEICENARGVQKSLEFFTATQVILKYELPAASLVDDLFGKLKGATKGYATLDYEDAGWRQAQLVKLNLLVNKKAVDAVARIVHTSQVERLGRQWVTKFKEHVDRQMFEVIIQAAAGRRIVARETIKPFRKDVLAKLHASDITRRRKLLEKQKAGRKRLRAVGNVIIDQSAFQKFLSK.

The tract at residues 40 to 68 (SVTVPAARRHNSTKSTNSTTSTNSTTATS) is disordered. Residues 52–68 (TKSTNSTTSTNSTTATS) are compositionally biased toward low complexity. Residues 89 to 272 (ERYRNFCIVA…AVIKKMPAPV (184 aa)) form the tr-type G domain. Residues 98 to 105 (AHIDHGKS), 165 to 169 (DTPGH), and 219 to 222 (NKID) contribute to the GTP site.

Belongs to the TRAFAC class translation factor GTPase superfamily. Classic translation factor GTPase family. LepA subfamily.

The protein localises to the mitochondrion inner membrane. The enzyme catalyses GTP + H2O = GDP + phosphate + H(+). In terms of biological role, promotes mitochondrial protein synthesis. May act as a fidelity factor of the translation reaction, by catalyzing a one-codon backward translocation of tRNAs on improperly translocated ribosomes. Binds to mitochondrial ribosomes in a GTP-dependent manner. The polypeptide is Translation factor GUF1, mitochondrial (Sordaria macrospora (strain ATCC MYA-333 / DSM 997 / K(L3346) / K-hell)).